Consider the following 419-residue polypeptide: ATP-dependent RNA helicase RhlB (419 aa).

A Q motif motif is present at residues 9–37 (QRFSDLALHRSVQQAIKEKGFEFCTPIQA). Residues 40–217 (LPITLKGQDI…FEHMNDPQYV (178 aa)) enclose the Helicase ATP-binding domain. 53–60 (AQTGTGKT) provides a ligand contact to ATP. The DEAD box signature appears at 163–166 (DEAD). A Helicase C-terminal domain is found at 241–388 (KMALLMTLLE…VSQYDAKALI (148 aa)).

This sequence belongs to the DEAD box helicase family. RhlB subfamily. Component of the RNA degradosome, which is a multiprotein complex involved in RNA processing and mRNA degradation.

It is found in the cytoplasm. It carries out the reaction ATP + H2O = ADP + phosphate + H(+). Functionally, DEAD-box RNA helicase involved in RNA degradation. Has RNA-dependent ATPase activity and unwinds double-stranded RNA. In Histophilus somni (strain 129Pt) (Haemophilus somnus), this protein is ATP-dependent RNA helicase RhlB.